The primary structure comprises 327 residues: L-serine dehydratase/L-threonine deaminase (327 aa).

Position 2 is an N-acetylalanine (alanine 2). Lysine 41 carries the N6-(pyridoxal phosphate)lysine modification. Proline 128 provides a ligand contact to pyridoxal 5'-phosphate.

Belongs to the serine/threonine dehydratase family. In terms of assembly, homodimer. Pyridoxal 5'-phosphate serves as cofactor.

Its subcellular location is the cytoplasm. The enzyme catalyses L-serine = pyruvate + NH4(+). It catalyses the reaction L-threonine = 2-oxobutanoate + NH4(+). It functions in the pathway carbohydrate biosynthesis; gluconeogenesis. Catalyzes the pyridoxal-phosphate-dependent dehydrative deamination of L-threonine and L-serine to ammonia and alpha-ketobutyrate and pyruvate, respectively. This is L-serine dehydratase/L-threonine deaminase (Sds) from Mus musculus (Mouse).